Consider the following 176-residue polypeptide: MSETPTSPNQDLPEAPQAGPLSQWLTSQGFDHQILGNDHLGIERLGVEPLALPLVATALKSKGFDYLQVQGGFDQGPGEPLVSFYHLVQVGGSDGASTAEVRLEVSLARDGDLTVPSLYPLFRGADWQERETFDLFGINYSGHPHPKRLLMPEDWVGYPLRKDYVQPDFYELQDAY.

A compositionally biased stretch (polar residues) spans 1–10 (MSETPTSPNQ). Residues 1 to 22 (MSETPTSPNQDLPEAPQAGPLS) form a disordered region.

This sequence belongs to the complex I 30 kDa subunit family. In terms of assembly, NDH-1 can be composed of about 15 different subunits; different subcomplexes with different compositions have been identified which probably have different functions.

The protein localises to the cellular thylakoid membrane. The catalysed reaction is a plastoquinone + NADH + (n+1) H(+)(in) = a plastoquinol + NAD(+) + n H(+)(out). It catalyses the reaction a plastoquinone + NADPH + (n+1) H(+)(in) = a plastoquinol + NADP(+) + n H(+)(out). NDH-1 shuttles electrons from an unknown electron donor, via FMN and iron-sulfur (Fe-S) centers, to quinones in the respiratory and/or the photosynthetic chain. The immediate electron acceptor for the enzyme in this species is believed to be plastoquinone. Couples the redox reaction to proton translocation, and thus conserves the redox energy in a proton gradient. Cyanobacterial NDH-1 also plays a role in inorganic carbon-concentration. The protein is NAD(P)H-quinone oxidoreductase subunit J of Synechococcus sp. (strain RCC307).